Reading from the N-terminus, the 553-residue chain is Probable malate:quinone oxidoreductase (553 aa).

Residues 524-553 are disordered; it reads PPPKIDLGAPSQATGNAPARPAKASADMAL.

It belongs to the MQO family. FAD serves as cofactor.

The enzyme catalyses (S)-malate + a quinone = a quinol + oxaloacetate. It participates in carbohydrate metabolism; tricarboxylic acid cycle; oxaloacetate from (S)-malate (quinone route): step 1/1. This Burkholderia cenocepacia (strain HI2424) protein is Probable malate:quinone oxidoreductase.